Here is a 341-residue protein sequence, read N- to C-terminus: Geranylgeranyl pyrophosphate synthase penG (341 aa).

Lysine 68, arginine 71, and histidine 100 together coordinate isopentenyl diphosphate. Mg(2+) is bound by residues aspartate 107 and aspartate 111. Dimethylallyl diphosphate is bound at residue arginine 116. Position 117 (arginine 117) interacts with isopentenyl diphosphate. Dimethylallyl diphosphate contacts are provided by lysine 194, threonine 195, and glutamine 228. Aspartate 231 contributes to the Mg(2+) binding site. The dimethylallyl diphosphate site is built by asparagine 235, lysine 245, and lysine 255.

This sequence belongs to the FPP/GGPP synthase family. It depends on Mg(2+) as a cofactor.

The enzyme catalyses isopentenyl diphosphate + dimethylallyl diphosphate = (2E)-geranyl diphosphate + diphosphate. It catalyses the reaction isopentenyl diphosphate + (2E)-geranyl diphosphate = (2E,6E)-farnesyl diphosphate + diphosphate. The catalysed reaction is isopentenyl diphosphate + (2E,6E)-farnesyl diphosphate = (2E,6E,10E)-geranylgeranyl diphosphate + diphosphate. The protein operates within secondary metabolite biosynthesis. Functionally, geranylgeranyl pyrophosphate synthase; part of the gene cluster that mediates the biosynthesis of the indole diterpenes penitrems. The geranylgeranyl diphosphate (GGPP) synthase penG catalyzes the first step in penitrem biosynthesis via conversion of farnesyl pyrophosphate and isopentyl pyrophosphate into geranylgeranyl pyrophosphate (GGPP). Condensation of indole-3-glycerol phosphate with GGPP by the prenyl transferase penC then forms 3-geranylgeranylindole (3-GGI). Epoxidation by the FAD-dependent monooxygenase penM leads to a epoxidized-GGI that is substrate of the terpene cyclase penB for cyclization to yield paspaline. Paspaline is subsequently converted to 13-desoxypaxilline by the cytochrome P450 monooxygenase penP, the latter being then converted to paxilline by the cytochrome P450 monooxygenase penQ. Paxilline is converted to beta-paxitriol via C-10 ketoreduction by the short-chain dehydrogenase PC-15 which can be monoprenylated at the C-20 by the indole diterpene prenyltransferase penD. A two-step elimination (acetylation and elimination) process performed by the O-acetyltransferase PC-16 and the P.simplicissimum ptmI-ortholog not yet identified in P.crustosum, leads to the production of the prenylated form of penijanthine. The FAD-linked oxidoreductase ptmO then converts the prenylated form of penijanthine into PC-M5 which is in turn transformed into PC-M4 by the aromatic dimethylallyltransferase PC-22. A series of oxidation steps involving 4 cytochrome P450 monooxygenases (PC-21, PC-05, PC-23, PC-20) and a FAD-dependent monooxygenase (PC-14) are required for the transformation of PC-M4 to penitrems A and E. Synthesis of these final products is proposed to proceed via penitrems D and C (PC-21, PC-05, PC-14) and penitrems B and F (PC-21, PC-05, PC-14, PC-23). This chain is Geranylgeranyl pyrophosphate synthase penG, found in Penicillium crustosum (Blue mold fungus).